The chain runs to 94 residues: Putative pterin-4-alpha-carbinolamine dehydratase (94 aa).

Belongs to the pterin-4-alpha-carbinolamine dehydratase family.

The enzyme catalyses (4aS,6R)-4a-hydroxy-L-erythro-5,6,7,8-tetrahydrobiopterin = (6R)-L-erythro-6,7-dihydrobiopterin + H2O. The chain is Putative pterin-4-alpha-carbinolamine dehydratase from Koribacter versatilis (strain Ellin345).